We begin with the raw amino-acid sequence, 465 residues long: Sorting nexin-8 (465 aa).

Over residues 1–19 (MTGRAMDPLPAAAVGAAAE) the composition is skewed to low complexity. Residues 1-36 (MTGRAMDPLPAAAVGAAAEAEADEEADPPASDLPTP) form a disordered region. Residues 73–181 (ARDTVQVELI…KLFLSFSGSD (109 aa)) enclose the PX domain. The a 1,2-diacyl-sn-glycero-3-phospho-(1D-myo-inositol-3-phosphate) site is built by arginine 109, lysine 135, and arginine 148. Threonine 452 is subject to Phosphothreonine. Serine 456 carries the phosphoserine modification.

Belongs to the sorting nexin family.

It is found in the early endosome membrane. Functionally, may be involved in several stages of intracellular trafficking. May play a role in intracellular protein transport from early endosomes to the trans-Golgi network. This Homo sapiens (Human) protein is Sorting nexin-8 (SNX8).